A 69-amino-acid chain; its full sequence is Mu-conotoxin-like Am3.1 (69 aa).

A signal peptide spans 1–20 (MMSKLRVLLIICLLLFPLTA). A propeptide spanning residues 21 to 52 (VPLDGDQPADRPAERTQDDISSEHHPMFDAVR) is cleaved from the precursor. The interval 22 to 43 (PLDGDQPADRPAERTQDDISSE) is disordered. Residues 28 to 43 (PADRPAERTQDDISSE) show a composition bias toward basic and acidic residues. The residue at position 66 (Pro-66) is a 4-hydroxyproline; partial; in minor form. At Cys-68 the chain carries Cysteine amide.

It belongs to the conotoxin M family. In terms of processing, mostly non-hydroxylated. Contains 3 disulfide bonds. Expressed by the venom duct.

It localises to the secreted. Mu-conotoxins block voltage-gated sodium channels (Nav). This is Mu-conotoxin-like Am3.1 from Conus amadis (Amadis cone).